The sequence spans 1659 residues: Vitellogenin (1659 aa).

The N-terminal stretch at Met-1 to Ser-15 is a signal peptide. Residues Phe-24–Val-662 form the Vitellogenin domain. The N-linked (GlcNAc...) asparagine glycan is linked to Asn-1089. 2 stretches are compositionally biased toward low complexity: residues Gly-1090–Arg-1111 and Ser-1119–Arg-1129. Positions Gly-1090–Arg-1163 are disordered. The 177-residue stretch at Val-1389–Arg-1565 folds into the VWFD domain. 2 disulfides stabilise this stretch: Cys-1391-Cys-1528 and Cys-1414-Cys-1564. The N-linked (GlcNAc...) asparagine glycan is linked to Asn-1627.

Phosvitin, an egg yolk storage protein, is one of the most highly phosphorylated (10%) proteins in nature. In terms of tissue distribution, produced by the liver, secreted into the blood and then sequestered by receptor mediated endocytosis into growing oocytes, where it is generally cleaved, giving rise to the respective yolk components lipovitellin-I, phosvitin, lipovitellin-II.

In terms of biological role, precursor of the major egg-yolk proteins that are sources of nutrients during early development of oviparous organisms. This chain is Vitellogenin (vtg1), found in Oncorhynchus mykiss (Rainbow trout).